The following is a 345-amino-acid chain: 3-hydroxy-5-methyl-1-naphthoate 3-O-methyltransferase (345 aa).

S-adenosyl-L-methionine is bound at residue Asp-205. His-252 serves as the catalytic Proton acceptor.

The protein belongs to the class I-like SAM-binding methyltransferase superfamily. Cation-independent O-methyltransferase family.

The catalysed reaction is 3-hydroxy-5-methyl-1-naphthoate + S-adenosyl-L-methionine = 3-methoxy-5-methyl-1-naphthoate + S-adenosyl-L-homocysteine + H(+). The protein operates within antibiotic biosynthesis. Inhibited by different divalent cations, such as Mg(2+), Mn(2+), Fe(2+), Cu(2+) and Zn(2+). Its function is as follows. O-methyltransferase that mediates the formation of 3-methoxy-5-methyl-1-naphthoate from 3-hydroxy-5-methyl-1-naphthoate in the biosynthesis of the antitumor antibiotic azinomycin B. This chain is 3-hydroxy-5-methyl-1-naphthoate 3-O-methyltransferase, found in Streptomyces sahachiroi.